The primary structure comprises 196 residues: DnaA initiator-associating protein DiaA (196 aa).

The 163-residue stretch at 34–196 (LVHSLLNGNK…DNTLFPHQDD (163 aa)) folds into the SIS domain.

Belongs to the SIS family. DiaA subfamily. As to quaternary structure, homotetramer; dimer of dimers.

In terms of biological role, required for the timely initiation of chromosomal replication via direct interactions with the DnaA initiator protein. The polypeptide is DnaA initiator-associating protein DiaA (Salmonella enteritidis PT4 (strain P125109)).